The following is a 393-amino-acid chain: tRNA(Met) cytidine acetate ligase (393 aa).

Gly-81, Asn-142, and Arg-167 together coordinate ATP.

The protein belongs to the TmcAL family.

It is found in the cytoplasm. The enzyme catalyses cytidine(34) in elongator tRNA(Met) + acetate + ATP = N(4)-acetylcytidine(34) in elongator tRNA(Met) + AMP + diphosphate. Catalyzes the formation of N(4)-acetylcytidine (ac(4)C) at the wobble position of elongator tRNA(Met), using acetate and ATP as substrates. First activates an acetate ion to form acetyladenylate (Ac-AMP) and then transfers the acetyl group to tRNA to form ac(4)C34. This is tRNA(Met) cytidine acetate ligase from Bacillus cytotoxicus (strain DSM 22905 / CIP 110041 / 391-98 / NVH 391-98).